The following is a 173-amino-acid chain: Ribosome maturation factor RimM (173 aa).

Residues 92-165 (EDEYYHTDLI…RVVVALPQEI (74 aa)) form the PRC barrel domain.

The protein belongs to the RimM family. As to quaternary structure, binds ribosomal protein uS19.

Its subcellular location is the cytoplasm. Functionally, an accessory protein needed during the final step in the assembly of 30S ribosomal subunit, possibly for assembly of the head region. Essential for efficient processing of 16S rRNA. May be needed both before and after RbfA during the maturation of 16S rRNA. It has affinity for free ribosomal 30S subunits but not for 70S ribosomes. The protein is Ribosome maturation factor RimM of Bradyrhizobium diazoefficiens (strain JCM 10833 / BCRC 13528 / IAM 13628 / NBRC 14792 / USDA 110).